Consider the following 270-residue polypeptide: Large ribosomal subunit protein uL10 (270 aa).

The interval valine 234 to aspartate 270 is disordered. Residues glutamate 238–arginine 250 are compositionally biased toward basic and acidic residues. Acidic residues predominate over residues aspartate 257 to aspartate 270.

This sequence belongs to the universal ribosomal protein uL10 family. As to quaternary structure, associates with the pre-60S ribosomal particle.

Its subcellular location is the nucleus. The protein resides in the nucleolus. It is found in the cytoplasm. Functionally, component of the ribosome assembly machinery. Nuclear paralog of the ribosomal protein P0, it binds pre-60S subunits at an early stage of assembly in the nucleolus, and is replaced by P0 in cytoplasmic pre-60S subunits and mature 80S ribosomes. The chain is Large ribosomal subunit protein uL10 from Chaetomium thermophilum (strain DSM 1495 / CBS 144.50 / IMI 039719) (Thermochaetoides thermophila).